The primary structure comprises 642 residues: Chaperone protein HtpG (642 aa).

An a; substrate-binding region spans residues 1–350 (MATDTQKETL…SNDLSLNVSR (350 aa)). The segment at 351 to 567 (EILQNDHAVD…EYDMGLQMRR (217 aa)) is b. Residues 568–642 (LLEQAGQKLP…MNKLIVQLSK (75 aa)) are c.

This sequence belongs to the heat shock protein 90 family. In terms of assembly, homodimer.

It localises to the cytoplasm. Functionally, molecular chaperone. Has ATPase activity. The protein is Chaperone protein HtpG of Marinomonas sp. (strain MWYL1).